Reading from the N-terminus, the 609-residue chain is Glutamine--fructose-6-phosphate aminotransferase [isomerizing] (609 aa).

Catalysis depends on Cys-2, which acts as the Nucleophile; for GATase activity. One can recognise a Glutamine amidotransferase type-2 domain in the interval 2 to 217 (CGIVGAIAGR…DGDTAEIRRD (216 aa)). SIS domains lie at 285-425 (AESV…LRGA) and 458-599 (WAEC…VDKP). Lys-604 functions as the For Fru-6P isomerization activity in the catalytic mechanism.

In terms of assembly, homodimer.

The protein resides in the cytoplasm. It carries out the reaction D-fructose 6-phosphate + L-glutamine = D-glucosamine 6-phosphate + L-glutamate. Catalyzes the first step in hexosamine metabolism, converting fructose-6P into glucosamine-6P using glutamine as a nitrogen source. The sequence is that of Glutamine--fructose-6-phosphate aminotransferase [isomerizing] from Xylella fastidiosa (strain Temecula1 / ATCC 700964).